A 324-amino-acid chain; its full sequence is Ferrochelatase (324 aa).

2 residues coordinate Fe cation: H197 and E278.

The protein belongs to the ferrochelatase family.

The protein resides in the cytoplasm. The catalysed reaction is heme b + 2 H(+) = protoporphyrin IX + Fe(2+). It participates in porphyrin-containing compound metabolism; protoheme biosynthesis; protoheme from protoporphyrin-IX: step 1/1. Its function is as follows. Catalyzes the ferrous insertion into protoporphyrin IX. The protein is Ferrochelatase of Aeromonas hydrophila subsp. hydrophila (strain ATCC 7966 / DSM 30187 / BCRC 13018 / CCUG 14551 / JCM 1027 / KCTC 2358 / NCIMB 9240 / NCTC 8049).